The primary structure comprises 504 residues: Occludin (504 aa).

The Cytoplasmic segment spans residues 1–57; sequence MFSKKSYDGPPAGYGPPTGYGAPTADYGYGSPPPGSYYVDDAPQLFYKWTSPPGAVR. Residues 51 to 253 form the MARVEL domain; that stretch reads SPPGAVRGLQ…ICFFAQKTRS (203 aa). A helical membrane pass occupies residues 58 to 80; that stretch reads GLQAGVLVLCIAIFACVASTLAW. At 81-123 the chain is on the extracellular side; that stretch reads DYGYGLGGAYGTGLGGFYGSNYYGSGLSYSYGYGGYYGGVNQR. Residues 124-148 form a helical membrane-spanning segment; sequence TANGFMIAMAVLCFLAQLGLLVAAL. The Cytoplasmic portion of the chain corresponds to 149 to 158; that stretch reads SKSGATRSRR. The chain crosses the membrane as a helical span at residues 159-183; that stretch reads FYLAVLVLSAVLAFVMLIASIVYIM. At 184–227 the chain is on the extracellular side; sequence GVNPQAQMSSGYYYSPLLAMCSQAYGSTYLNQYIYHYCTVDPQE. Cys204 and Cys221 are disulfide-bonded. A helical membrane pass occupies residues 228-249; the sequence is AVAAVCGFLIVILLCLICFFAQ. Topologically, residues 250–504 are cytoplasmic; the sequence is KTRSKIWRYG…MVSAYDKVRG (255 aa). The tract at residues 324–396 is disordered; sequence PSGTYSSRGD…VESSDERDQE (73 aa). Basic residues predominate over residues 361-370; it reads PARRGRRRRR. 2 positions are modified to phosphotyrosine: Tyr379 and Tyr383. The segment at 379–385 is interaction with TJP1; the sequence is YETDYTT. Residues 396 to 504 enclose the OCEL domain; sequence EQWASLYPPI…MVSAYDKVRG (109 aa). Residues 412–471 are a coiled coil; the sequence is QRYKQEFDTDLKRYKQLCAEMDSINDRLNQLSRRLDSITEDSPQYQDVAEEYNQLKDLKR.

It belongs to the ELL/occludin family. In terms of assembly, interacts with TJP1 and TJP3. Phosphorylated. In terms of tissue distribution, localized at tight junctions of both epithelial and endothelial cells. Highly expressed in lung and liver. Expressed at a lower level in brain.

It is found in the cell membrane. It localises to the cell junction. Its subcellular location is the tight junction. May play a role in the formation and regulation of the tight junction (TJ) paracellular permeability barrier. Interacts with ZO-1. This is Occludin (OCLN) from Gallus gallus (Chicken).